Here is a 285-residue protein sequence, read N- to C-terminus: Bifunctional protein FolD (285 aa).

NADP(+) contacts are provided by residues 165–167 (GRG), Thr192, and Val233.

Belongs to the tetrahydrofolate dehydrogenase/cyclohydrolase family. As to quaternary structure, homodimer.

It carries out the reaction (6R)-5,10-methylene-5,6,7,8-tetrahydrofolate + NADP(+) = (6R)-5,10-methenyltetrahydrofolate + NADPH. It catalyses the reaction (6R)-5,10-methenyltetrahydrofolate + H2O = (6R)-10-formyltetrahydrofolate + H(+). It functions in the pathway one-carbon metabolism; tetrahydrofolate interconversion. Its function is as follows. Catalyzes the oxidation of 5,10-methylenetetrahydrofolate to 5,10-methenyltetrahydrofolate and then the hydrolysis of 5,10-methenyltetrahydrofolate to 10-formyltetrahydrofolate. The polypeptide is Bifunctional protein FolD (Mycobacterium sp. (strain MCS)).